The primary structure comprises 325 residues: tRNA N6-adenosine threonylcarbamoyltransferase (325 aa).

Residues H111 and H115 each contribute to the Fe cation site. Substrate contacts are provided by residues 134-138, D167, G180, and N277; that span reads LISGG. D305 provides a ligand contact to Fe cation.

The protein belongs to the KAE1 / TsaD family. It depends on Fe(2+) as a cofactor.

It localises to the cytoplasm. It is found in the secreted. The catalysed reaction is L-threonylcarbamoyladenylate + adenosine(37) in tRNA = N(6)-L-threonylcarbamoyladenosine(37) in tRNA + AMP + H(+). Its function is as follows. Required for the formation of a threonylcarbamoyl group on adenosine at position 37 (t(6)A37) in tRNAs that read codons beginning with adenine. Is involved in the transfer of the threonylcarbamoyl moiety of threonylcarbamoyl-AMP (TC-AMP) to the N6 group of A37, together with TsaE and TsaB. TsaD likely plays a direct catalytic role in this reaction. This is tRNA N6-adenosine threonylcarbamoyltransferase from Mannheimia haemolytica (Pasteurella haemolytica).